The sequence spans 316 residues: Beta-ketoacyl-[acyl-carrier-protein] synthase III (316 aa).

Catalysis depends on residues cysteine 112 and histidine 243. An ACP-binding region spans residues 244-248; that stretch reads QANIR. Asparagine 273 is a catalytic residue.

This sequence belongs to the thiolase-like superfamily. FabH family. Homodimer.

The protein localises to the cytoplasm. The enzyme catalyses malonyl-[ACP] + acetyl-CoA + H(+) = 3-oxobutanoyl-[ACP] + CO2 + CoA. The protein operates within lipid metabolism; fatty acid biosynthesis. Functionally, catalyzes the condensation reaction of fatty acid synthesis by the addition to an acyl acceptor of two carbons from malonyl-ACP. Catalyzes the first condensation reaction which initiates fatty acid synthesis and may therefore play a role in governing the total rate of fatty acid production. Possesses both acetoacetyl-ACP synthase and acetyl transacylase activities. Its substrate specificity determines the biosynthesis of branched-chain and/or straight-chain of fatty acids. The protein is Beta-ketoacyl-[acyl-carrier-protein] synthase III of Haemophilus ducreyi (strain 35000HP / ATCC 700724).